Here is a 195-residue protein sequence, read N- to C-terminus: ATP-dependent Clp protease proteolytic subunit (195 aa).

Catalysis depends on S98, which acts as the Nucleophile. H123 is an active-site residue.

It belongs to the peptidase S14 family. As to quaternary structure, fourteen ClpP subunits assemble into 2 heptameric rings which stack back to back to give a disk-like structure with a central cavity, resembling the structure of eukaryotic proteasomes.

It localises to the cytoplasm. The catalysed reaction is Hydrolysis of proteins to small peptides in the presence of ATP and magnesium. alpha-casein is the usual test substrate. In the absence of ATP, only oligopeptides shorter than five residues are hydrolyzed (such as succinyl-Leu-Tyr-|-NHMec, and Leu-Tyr-Leu-|-Tyr-Trp, in which cleavage of the -Tyr-|-Leu- and -Tyr-|-Trp bonds also occurs).. Cleaves peptides in various proteins in a process that requires ATP hydrolysis. Has a chymotrypsin-like activity. Plays a major role in the degradation of misfolded proteins. The polypeptide is ATP-dependent Clp protease proteolytic subunit (Staphylococcus haemolyticus (strain JCSC1435)).